The sequence spans 263 residues: 3-methyl-2-oxobutanoate hydroxymethyltransferase (263 aa).

Residues D43 and D82 each contribute to the Mg(2+) site. 3-methyl-2-oxobutanoate is bound by residues 43 to 44 (DS), D82, and K111. E113 serves as a coordination point for Mg(2+). E179 functions as the Proton acceptor in the catalytic mechanism.

Belongs to the PanB family. As to quaternary structure, homodecamer; pentamer of dimers. The cofactor is Mg(2+).

It is found in the cytoplasm. It catalyses the reaction 3-methyl-2-oxobutanoate + (6R)-5,10-methylene-5,6,7,8-tetrahydrofolate + H2O = 2-dehydropantoate + (6S)-5,6,7,8-tetrahydrofolate. Its pathway is cofactor biosynthesis; (R)-pantothenate biosynthesis; (R)-pantoate from 3-methyl-2-oxobutanoate: step 1/2. In terms of biological role, catalyzes the reversible reaction in which hydroxymethyl group from 5,10-methylenetetrahydrofolate is transferred onto alpha-ketoisovalerate to form ketopantoate. In Neisseria meningitidis serogroup B (strain ATCC BAA-335 / MC58), this protein is 3-methyl-2-oxobutanoate hydroxymethyltransferase.